The following is a 192-amino-acid chain: GTP cyclohydrolase 1 (192 aa).

Residues C82, H85, and C153 each contribute to the Zn(2+) site.

The protein belongs to the GTP cyclohydrolase I family. Toroid-shaped homodecamer, composed of two pentamers of five dimers.

It carries out the reaction GTP + H2O = 7,8-dihydroneopterin 3'-triphosphate + formate + H(+). Its pathway is cofactor biosynthesis; 7,8-dihydroneopterin triphosphate biosynthesis; 7,8-dihydroneopterin triphosphate from GTP: step 1/1. The sequence is that of GTP cyclohydrolase 1 from Rickettsia bellii (strain OSU 85-389).